Here is a 445-residue protein sequence, read N- to C-terminus: Methionine aminopeptidase 2 (445 aa).

Residues 1 to 76 form a disordered region; it reads MAAQVASGVG…KKKCTSKVQT (76 aa). The segment covering 57–71 has biased composition (basic residues); that stretch reads AKKKKKKTKKKKKCT. H195 provides a ligand contact to substrate. D215, D226, and H295 together coordinate a divalent metal cation. Residue H303 participates in substrate binding. 2 residues coordinate a divalent metal cation: E331 and E426.

This sequence belongs to the peptidase M24A family. Methionine aminopeptidase eukaryotic type 2 subfamily. Requires Co(2+) as cofactor. It depends on Zn(2+) as a cofactor. Mn(2+) serves as cofactor. Fe(2+) is required as a cofactor.

It localises to the cytoplasm. The enzyme catalyses Release of N-terminal amino acids, preferentially methionine, from peptides and arylamides.. Cotranslationally removes the N-terminal methionine from nascent proteins. The N-terminal methionine is often cleaved when the second residue in the primary sequence is small and uncharged (Met-Ala-, Cys, Gly, Pro, Ser, Thr, or Val). The polypeptide is Methionine aminopeptidase 2 (Paracoccidioides lutzii (strain ATCC MYA-826 / Pb01) (Paracoccidioides brasiliensis)).